The primary structure comprises 1168 residues: Myosin IC heavy chain (1168 aa).

The region spanning 7-666 is the Myosin motor domain; it reads HGVDDMVMLT…SVFSLEELRD (660 aa). 101 to 108 provides a ligand contact to ATP; sequence GESGAGKT. Serine 311 is modified (phosphoserine). An actin-binding region spans residues 542 to 564; it reads INILVATLSKCTPHYIRCIKPNE. One can recognise a TH1 domain in the interval 704-892; sequence KERRRLSLER…KVSVAPGLPP (189 aa). Disordered stretches follow at residues 876-909, 921-978, and 1036-1168; these read DGKV…GGAS, ILGA…APGP, and AAAP…PPGM. Residues 895–909 are compositionally biased toward polar residues; that stretch reads APNIQAPQETSGGAS. 2 stretches are compositionally biased toward gly residues: residues 924 to 939 and 950 to 959; these read AKGG…GGPS and PGGGGGGPSP. Over residues 960–978 the composition is skewed to low complexity; the sequence is FGGRPSPSGPPAAASAPGP. The SH3 domain maps to 976–1035; the sequence is PGPEQARALYDFAAENPDELTFNEGAVVTVINKSNPDWWEGELNGQRGVFPASYVELIPR. Pro residues predominate over residues 1040-1052; it reads APGPSGGPRPAPP. 2 stretches are compositionally biased toward gly residues: residues 1063-1083 and 1090-1099; these read GGPG…GRGG and GRAGPPGGRG. Positions 1100-1112 are enriched in low complexity; that stretch reads MPAPGGAAPRGRG. Residues 1120–1141 are compositionally biased toward gly residues; that stretch reads GPPGGGRGGAPPPGGMRGRGGP. The segment covering 1152-1161 has biased composition (low complexity); that stretch reads GGMMPPRGRA.

It belongs to the TRAFAC class myosin-kinesin ATPase superfamily. Myosin family. In terms of assembly, myosin I heavy chain is single-headed. Dimer of a heavy and a light chain. Inability to self-assemble into filaments.

Myosin is a protein that binds to F-actin and has ATPase activity that is activated by F-actin. The protein is Myosin IC heavy chain (MIC) of Acanthamoeba castellanii (Amoeba).